The primary structure comprises 289 residues: Probable endonuclease 4 (289 aa).

The Zn(2+) site is built by histidine 75, histidine 115, glutamate 153, aspartate 187, histidine 190, histidine 224, aspartate 237, histidine 239, and glutamate 269.

This sequence belongs to the AP endonuclease 2 family. Requires Zn(2+) as cofactor.

The catalysed reaction is Endonucleolytic cleavage to 5'-phosphooligonucleotide end-products.. In terms of biological role, endonuclease IV plays a role in DNA repair. It cleaves phosphodiester bonds at apurinic or apyrimidinic (AP) sites, generating a 3'-hydroxyl group and a 5'-terminal sugar phosphate. The chain is Probable endonuclease 4 from Chlamydia caviae (strain ATCC VR-813 / DSM 19441 / 03DC25 / GPIC) (Chlamydophila caviae).